The following is a 356-amino-acid chain: Peptide-N(4)-(N-acetyl-beta-glucosaminyl)asparagine amidase (356 aa).

Positions 129, 132, 163, and 166 each coordinate Zn(2+). C189 functions as the Nucleophile in the catalytic mechanism. Catalysis depends on residues H216 and D233. Substrate is bound at residue E236. Residues 300 to 356 (IRQNLSPSEKEELKREDEAEERELASYNADEPQEAQMPRQSGSVEWTKARGEGGSDD) are disordered. Composition is skewed to basic and acidic residues over residues 307-316 (SEKEELKRED) and 346-356 (TKARGEGGSDD).

This sequence belongs to the transglutaminase-like superfamily. PNGase family. The cofactor is Zn(2+).

The protein resides in the cytoplasm. The catalysed reaction is Hydrolysis of an N(4)-(acetyl-beta-D-glucosaminyl)asparagine residue in which the glucosamine residue may be further glycosylated, to yield a (substituted) N-acetyl-beta-D-glucosaminylamine and a peptide containing an aspartate residue.. In terms of biological role, specifically deglycosylates the denatured form of N-linked glycoproteins in the cytoplasm and assists their proteasome-mediated degradation. Cleaves the beta-aspartyl-glucosamine (GlcNAc) of the glycan and the amide side chain of Asn, converting Asn to Asp. Prefers proteins containing high-mannose over those bearing complex type oligosaccharides. Can recognize misfolded proteins in the endoplasmic reticulum that are exported to the cytosol to be destroyed and deglycosylate them, while it has no activity toward native proteins. Deglycosylation is a prerequisite for subsequent proteasome-mediated degradation of some, but not all, misfolded glycoproteins. This is Peptide-N(4)-(N-acetyl-beta-glucosaminyl)asparagine amidase (PNG1) from Yarrowia lipolytica (strain CLIB 122 / E 150) (Yeast).